A 93-amino-acid polypeptide reads, in one-letter code: DNA-directed RNA polymerase subunit omega (93 aa).

Belongs to the RNA polymerase subunit omega family. In terms of assembly, the RNAP catalytic core consists of 2 alpha, 1 beta, 1 beta' and 1 omega subunit. When a sigma factor is associated with the core the holoenzyme is formed, which can initiate transcription.

It carries out the reaction RNA(n) + a ribonucleoside 5'-triphosphate = RNA(n+1) + diphosphate. Promotes RNA polymerase assembly. Latches the N- and C-terminal regions of the beta' subunit thereby facilitating its interaction with the beta and alpha subunits. The sequence is that of DNA-directed RNA polymerase subunit omega from Shewanella loihica (strain ATCC BAA-1088 / PV-4).